Consider the following 504-residue polypeptide: Maturase K (504 aa).

This sequence belongs to the intron maturase 2 family. MatK subfamily.

It localises to the plastid. The protein localises to the chloroplast. Usually encoded in the trnK tRNA gene intron. Probably assists in splicing its own and other chloroplast group II introns. The polypeptide is Maturase K (Quercus coccifera (Kermes oak)).